The primary structure comprises 585 residues: Mitochondrial sodium/calcium exchanger protein (585 aa).

A signal peptide spans M1–G26. Over T27–L95 the chain is Extracellular. N46 carries N-linked (GlcNAc...) asparagine glycosylation. The chain crosses the membrane as a helical span at residues L96 to V116. Residues T117–A140 are Cytoplasmic-facing. A helical transmembrane segment spans residues G141 to F161. Residues S162 to G168 lie on the Extracellular side of the membrane. Residues L169–I189 form a helical membrane-spanning segment. Over T190–D205 the chain is Cytoplasmic. Residues I206–T226 traverse the membrane as a helical segment. Residues L227–W229 lie on the Extracellular side of the membrane. The helical transmembrane segment at A230–V250 threads the bilayer. Topologically, residues Y251–R325 are cytoplasmic. S258 carries the phosphoserine; by PKA modification. The helical transmembrane segment at V326 to D346 threads the bilayer. Over P347–C360 the chain is Extracellular. Residues L361–I381 traverse the membrane as a helical segment. Residues Y382–E383 lie on the Cytoplasmic side of the membrane. A helical transmembrane segment spans residues I384 to V404. The Extracellular portion of the chain corresponds to T405–R416. A helical membrane pass occupies residues L417–A437. Topologically, residues T438–R445 are cytoplasmic. Residues S446 to G466 traverse the membrane as a helical segment. At N467 to C491 the chain is on the extracellular side. A helical membrane pass occupies residues F492 to I512. Over R513–G525 the chain is Cytoplasmic. The chain crosses the membrane as a helical span at residues L526–V546. At P547 to L559 the chain is on the extracellular side. Residues C560 to I580 traverse the membrane as a helical segment. At H581–A585 the chain is on the cytoplasmic side.

It belongs to the Ca(2+):cation antiporter (CaCA) (TC 2.A.19) family. SLC24A subfamily. In terms of processing, phosphorylation at Ser-258 by PKA prevents calcium overload. In terms of tissue distribution, ubiquitously expressed. Expressed in dental tissues.

The protein resides in the mitochondrion inner membrane. Its subcellular location is the cell membrane. It catalyses the reaction Ca(2+)(in) + 3 Na(+)(out) = Ca(2+)(out) + 3 Na(+)(in). The catalysed reaction is 3 Li(+)(out) + Ca(2+)(in) = 3 Li(+)(in) + Ca(2+)(out). Its activity is regulated as follows. Inhibited by the sodium/calcium exchanger inhibitor CGP-37157. Strongly inhibited by zinc. Functionally, mitochondrial sodium/calcium antiporter that mediates sodium-dependent calcium efflux from mitochondrion, by mediating the exchange of 3 sodium ions per 1 calcium ion. Plays a central role in mitochondrial calcium homeostasis by mediating mitochondrial calcium extrusion: calcium efflux is essential for mitochondrial function and cell survival, notably in cardiomyocytes. Regulates rates of glucose-dependent insulin secretion in pancreatic beta-cells during the first phase of insulin secretion: acts by mediating efflux of calcium from mitochondrion, thereby affecting cytoplasmic calcium responses. Required for store-operated Ca(2+) entry (SOCE) and Ca(2+) release-activated Ca(2+) (CRAC) channel regulation: sodium transport by SLC8B1 leads to promote calcium-shuttling that modulates mitochondrial redox status, thereby regulating SOCE activity. Involved in B-lymphocyte chemotaxis. Able to transport Ca(2+) in exchange of either Li(+) or Na(+), explaining how Li(+) catalyzes Ca(2+) exchange. In contrast to other members of the family its function is independent of K(+). This is Mitochondrial sodium/calcium exchanger protein from Mus musculus (Mouse).